The primary structure comprises 867 residues: MDESALLDLLECPVCLERLDATAKVLPCQHTFCRRCLLGIVGSRGELRCPECRTLVESGVDELPSNILLVRLLDGIKQRPRRTGSVHGTCANGSAVAGVRAQGAGGSQRDPGPTGGQSQRVQAKSTPVRGVPQLPCAKALYNYDGKEPGDLKFSKGDIIILRRQVDENWYHGEMGGVHGFFPTNFVQVIKPLPQPPPQCKALYDFELKDKEADKDCLPFSKDDILTVIRRVDENWAEGMLGDKIGIFPISYVEFNSAARQLIELDKPSEGGGDSSEGPSSSSSGPQANGSQKAPGEKKNSKKRHSFTSLTMSHKPCLAPPPQRHSMEISGPVLISSSNPTAAARIGELSGGLSSSAPSQVHICTTGLIVTPPPSSPVTTATVFTFPPETSYASIPVDALPPPPPPPPQSQSSVVGAAALNAGQRPSPAAGDQSGRQRPTVYVAMFPYSPRKEDELELRKGEMFLVLERCQDGWFKGTSMHTGKIGVFPGNYMSPVSRTVSGSSQPKVPLTLCSQAGRGVTIVSPSSALGSMDLSKPLPVCPNATPSCSLPAAVVTAAHLPTGQHPKVLMHVTSQMTVNQARNAVRTAVSHSQDRPTAAVTPIQSHNPVAYLPSTAVVLQASPVLNSSSGCSSARVGVALGCAAASLTPPNVSAASLDTDAMRPVPMVALPVNAGSTKPLGAASNHGVACRLDKDCKREKKGLLKLLSNKKKLRPSPPSSPTLEAEQSVSMELPQGAVGPEMALSGSAGHNGRIGACPMDSELSMSSSSSNTDAVTHRSSPQDNTAPIAPPPRQPCSSLLSMQHDGRPIVCERYRVVVSYPPQSEAELELKEGDIVFVHKKREDGWFKGTLQRNGRTGLFPGSFVDSI.

An RING-type zinc finger spans residues 12–53; it reads CPVCLERLDATAKVLPCQHTFCRRCLLGIVGSRGELRCPECR. The segment at 101 to 127 is disordered; the sequence is AQGAGGSQRDPGPTGGQSQRVQAKSTP. Polar residues predominate over residues 116–125; that stretch reads GQSQRVQAKS. SH3 domains are found at residues 132 to 191 and 194 to 257; these read PQLP…VIKP and QPPP…FNSA. A disordered region spans residues 265-328; sequence DKPSEGGGDS…PPPQRHSMEI (64 aa). Low complexity predominate over residues 275–285; the sequence is SEGPSSSSSGP. Residues 436–497 form the SH3 3 domain; it reads QRPTVYVAMF…PGNYMSPVSR (62 aa). A disordered region spans residues 706-794; that stretch reads LSNKKKLRPS…APIAPPPRQP (89 aa). Positions 760-769 are enriched in low complexity; the sequence is SELSMSSSSS. Residues 770-784 show a composition bias toward polar residues; that stretch reads NTDAVTHRSSPQDNT. An SH3 4 domain is found at 808-867; it reads IVCERYRVVVSYPPQSEAELELKEGDIVFVHKKREDGWFKGTLQRNGRTGLFPGSFVDSI.

This sequence belongs to the SH3RF family. Post-translationally, autoubiquitinated. Ubiquitinated by SH3RF2, leading to proteasome-mediated degradation.

Its subcellular location is the cytoplasm. The protein localises to the perinuclear region. The protein resides in the cell projection. It localises to the lamellipodium. It is found in the golgi apparatus. Its subcellular location is the trans-Golgi network. It catalyses the reaction S-ubiquitinyl-[E2 ubiquitin-conjugating enzyme]-L-cysteine + [acceptor protein]-L-lysine = [E2 ubiquitin-conjugating enzyme]-L-cysteine + N(6)-ubiquitinyl-[acceptor protein]-L-lysine.. Its pathway is protein modification; protein ubiquitination. Functionally, has E3 ubiquitin-protein ligase activity. In the absence of an external substrate, it can catalyze self-ubiquitination. Acts as a scaffold protein that contributes to the effective activation of the JNK signaling pathway. This is E3 ubiquitin-protein ligase SH3RF1 (sh3rf1) from Danio rerio (Zebrafish).